A 546-amino-acid polypeptide reads, in one-letter code: DDB1- and CUL4-associated factor 11 (546 aa).

The span at 1-10 (MGSRNSSSAG) shows a compositional bias: polar residues. The interval 1-40 (MGSRNSSSAGTGSGDPSEGLPRRGAGLRRSEEEEEEDEDV) is disordered. 2 positions are modified to phosphoserine: serine 73 and serine 75. The interval 79–100 (HDSAWDGRLGDRYNPPVDATPD) is disordered. The span at 80 to 89 (DSAWDGRLGD) shows a compositional bias: basic and acidic residues. WD repeat units follow at residues 170–210 (TYSQ…RKFK), 216–258 (DVGW…TALD), 263–302 (ERRFAVFSIAVSSDGREVLGGANDGCLYVFDREQNRRTLQ), 305–345 (SHED…EDDP), 353–392 (GHQDGITFIDSKGDARYLISNSKDQTIKLWDIRRFSSREG), 435–480 (GVLH…KKLT), and 481–520 (THKACVRDVSWHPFEEKIVSSSWDGNLRLWQYRQAEYFQD). Residues 521-546 (DMPESEEHPSTPAPMSHPSTAFSSPQ) form a disordered region. Residues 537 to 546 (HPSTAFSSPQ) are compositionally biased toward polar residues.

In terms of assembly, interacts with DDB1 and CUL4A.

Its pathway is protein modification; protein ubiquitination. Its function is as follows. May function as a substrate receptor for CUL4-DDB1 E3 ubiquitin-protein ligase complex. This is DDB1- and CUL4-associated factor 11 (DCAF11) from Bos taurus (Bovine).